The chain runs to 193 residues: Glycerol-3-phosphate acyltransferase (193 aa).

4 helical membrane passes run 2 to 22 (LIAL…GLIV), 76 to 96 (VPIH…FPVF), 112 to 132 (LLFY…VFLF), and 152 to 172 (CLFV…AFVI).

Belongs to the PlsY family. In terms of assembly, probably interacts with PlsX.

The protein localises to the cell membrane. It carries out the reaction an acyl phosphate + sn-glycerol 3-phosphate = a 1-acyl-sn-glycero-3-phosphate + phosphate. Its pathway is lipid metabolism; phospholipid metabolism. In terms of biological role, catalyzes the transfer of an acyl group from acyl-phosphate (acyl-PO(4)) to glycerol-3-phosphate (G3P) to form lysophosphatidic acid (LPA). This enzyme utilizes acyl-phosphate as fatty acyl donor, but not acyl-CoA or acyl-ACP. The chain is Glycerol-3-phosphate acyltransferase from Bacillus velezensis (strain DSM 23117 / BGSC 10A6 / LMG 26770 / FZB42) (Bacillus amyloliquefaciens subsp. plantarum).